Reading from the N-terminus, the 1134-residue chain is Ovochymase-1 (1134 aa).

Positions 1–22 (MGLLASAGLLLLLVIGHPRSLG) are cleaved as a signal peptide. Positions 23–46 (LKCGIRMVNMKSKEPAVGSRFFSR) are cleaved as a propeptide — activation peptide. Residues 38–296 (AVGSRFFSRI…LMDFITQNLF (259 aa)) enclose the Peptidase S1 1 domain. Residue N52 is glycosylated (N-linked (GlcNAc...) asparagine). A disulfide bridge connects residues C72 and C88. The Charge relay system role is filled by H87. The N-linked (GlcNAc...) asparagine glycan is linked to N99. Ca(2+) is bound at residue E116. D139 (charge relay system) is an active-site residue. 3 disulfides stabilise this stretch: C173–C243, C204–C222, and C233–C262. Catalysis depends on S237, which acts as the Charge relay system. 2 consecutive CUB domains span residues 284 to 410 (VSEL…VTAV) and 419 to 531 (CGSL…FTIL). The N-linked (GlcNAc...) asparagine glycan is linked to N324. 3 disulfide bridges follow: C341–C373, C419–C446, and C473–C494. N431 carries an N-linked (GlcNAc...) asparagine glycan. N-linked (GlcNAc...) asparagine glycosylation is present at N507. In terms of domain architecture, Peptidase S1 2 spans 575-812 (IAGGEEACPH…FLDWIQSKIN (238 aa)). C600 and C616 form a disulfide bridge. Active-site charge relay system residues include H615 and D664. Cystine bridges form between C698/C769, C729/C747, C759/C788, and C846/C873. Residue S763 is the Charge relay system of the active site. Residues 846–957 (CSEAELEKPR…GAFGISYIVL (112 aa)) enclose the CUB 3 domain. An N-linked (GlcNAc...) asparagine glycan is attached at N1106.

Belongs to the peptidase S1 family.

The protein localises to the secreted. This chain is Ovochymase-1 (OVCH1), found in Homo sapiens (Human).